The primary structure comprises 841 residues: MKLWIHLFYSSLLACISLHSQTPVLSSRGSCDSLCNCEEKDGTMLINCEAKGIKMVSEISVPPSRPFQLSLLNNGLTMLHTNDFSGLTNAISIHLGFNNIADIEIGAFNGLGLLKQLHINHNSLEILKEDTFHGLENLEFLQADNNFITVIEPSAFSKLNRLKVLILNDNAIESLPPNIFRFVPLTHLDLRGNQLQTLPYVGFLEHIGRILDLQLEDNKWACNCDLLQLKTWLENMPPQSIIGDVVCNSPPFFKGSILSRLKKESICPTPPVYEEHEDPSGSLHLAATSSINDSRMSTKTTSILKLPTKAPGLIPYITKPSTQLPGPYCPIPCNCKVLSPSGLLIHCQERNIESLSDLRPPPQNPRKLILAGNIIHSLMKSDLVEYFTLEMLHLGNNRIEVLEEGSFMNLTRLQKLYLNGNHLTKLSKGMFLGLHNLEYLYLEYNAIKEILPGTFNPMPKLKVLYLNNNLLQVLPPHIFSGVPLTKVNLKTNQFTHLPVSNILDDLDLLTQIDLEDNPWDCSCDLVGLQQWIQKLSKNTVTDDILCTSPGHLDKKELKALNSEILCPGLVNNPSMPTQTSYLMVTTPATTTNTADTILRSLTDAVPLSVLILGLLIMFITIVFCAAGIVVLVLHRRRRYKKKQVDEQMRDNSPVHLQYSMYGHKTTHHTTERPSASLYEQHMVSPMVHVYRSPSFGPKHLEEEEERNEKEGSDAKHLQRSLLEQENHSPLTGSNMKYKTTNQSTEFLSFQDASSLYRNILEKERELQQLGITEYLRKNIAQLQPDMEAHYPGAHEELKLMETLMYSRPRKVLVEQTKNEYFELKANLHAEPDYLEVLEQQT.

Residues Met-1–Ser-26 form the signal peptide. Residues Ser-27 to Phe-67 enclose the LRRNT 1 domain. The Extracellular portion of the chain corresponds to Ser-27–Ser-608. 5 LRR repeats span residues Asn-89 to Gly-110, Leu-113 to Gly-134, Asn-137 to Lys-158, Arg-161 to Phe-182, and Pro-184 to Glu-205. The LRRCT 1 domain maps to Asn-218 to Thr-269. The 42-residue stretch at Pro-320–Pro-361 folds into the LRRNT 2 domain. LRR repeat units lie at residues Asn-364–Glu-385, Thr-388–Asn-409, Arg-412–Gly-433, Asn-436–Pro-457, Lys-460–Gly-481, and Pro-483–Asp-504. The 52-residue stretch at Asn-517 to Gly-568 folds into the LRRCT 2 domain. The helical transmembrane segment at Val-609–Val-629 threads the bilayer. At Val-630–Thr-841 the chain is on the cytoplasmic side.

The protein belongs to the SLITRK family. In terms of tissue distribution, in adult brain, highly expressed in putamen with no expression in cerebral cortex. Expressed in adult and fetal lung and fetal liver. Also expressed at high levels in some brain tumors including medulloblastomas and primitive neuroectodermal tumors.

It localises to the cell membrane. Functionally, regulator of neurite outgrowth required for normal hearing and vision. The chain is SLIT and NTRK-like protein 6 (SLITRK6) from Homo sapiens (Human).